We begin with the raw amino-acid sequence, 429 residues long: MTMNFVTFNQDYSYLAVATSKGFRIFTTDPFAKSYETKDGNIAIIEMLFSTSLVALILSPRRLQITNTKRQSTICELTFPTTVLAVKLNRKRLVIVLEDQIYLYDIQTMKLLYTIETSPNPNALCALSPSSENCYLAYPLPQKAAPSSFNPPAHAPPGNTHVSPTSGEVLIFDTLKLEAINVIEAHRSPLACITLNSDGTLIATASDKGTIIRVFSVPDGHKLYQFRRGSIPSRIFSMSFNTTSTLLCVSSSTETIHLFKLSQPSQLQETSSANTSSTGRRRSLSSLSQSPEREATEEDNGSSDLASRKHNGTLMGMLRRTSQNVGGAFAAKVGGYLPKGVSEMWEPARDFAWIKIPKPNQGQGPNANTGPLRSVVAMSSNTPQVMVVTSDGNFYVFSIDLSKGGEGTLTKQYSVLESNDRLGYSVADY.

WD repeat units lie at residues 1-36, 69-114, 139-182, 185-225, 230-269, 309-355, and 367-407; these read MTMN…KSYE, KRQS…LLYT, PLPQ…AINV, AHRS…KLYQ, SIPS…QLQE, KHNG…AWIK, and ANTG…GGEG. The L/FRRG motif motif lies at 226 to 230; the sequence is FRRGS. The disordered stretch occupies residues 267-309; sequence LQETSSANTSSTGRRRSLSSLSQSPEREATEEDNGSSDLASRK.

The protein belongs to the WD repeat PROPPIN family. In terms of assembly, component of the PI(3,5)P2 regulatory complex.

It is found in the preautophagosomal structure membrane. The protein resides in the vacuole membrane. It localises to the endosome membrane. Functionally, the PI(3,5)P2 regulatory complex regulates both the synthesis and turnover of phosphatidylinositol 3,5-bisphosphate (PtdIns(3,5)P2). Necessary for proper vacuole morphology. Plays an important role in osmotically-induced vacuole fragmentation. Required for cytoplasm to vacuole transport (Cvt) vesicle formation, pexophagy and starvation-induced autophagy. Involved in correct ATG9 trafficking to the pre-autophagosomal structure. Might also be involved in premeiotic DNA replication. The sequence is that of Autophagy-related protein 18 (atg18) from Emericella nidulans (strain FGSC A4 / ATCC 38163 / CBS 112.46 / NRRL 194 / M139) (Aspergillus nidulans).